Here is a 388-residue protein sequence, read N- to C-terminus: Putative nickel insertion protein (388 aa).

The protein belongs to the LarC family.

This is Putative nickel insertion protein from Syntrophobacter fumaroxidans (strain DSM 10017 / MPOB).